A 525-amino-acid chain; its full sequence is Mitochondrial-processing peptidase subunit alpha (525 aa).

A mitochondrion-targeting transit peptide spans 1–33; sequence MAAVVLAATRLLRGSGSWGCSRLRFGPPAYRRF. At Lys-64 the chain carries N6-succinyllysine. Lys-299 bears the N6-acetyllysine mark.

The protein belongs to the peptidase M16 family. As to quaternary structure, heterodimer of PMPCA (alpha) and PMPCB (beta) subunits, forming the mitochondrial processing protease (MPP) in which PMPCA is involved in substrate recognition and binding and PMPCB is the catalytic subunit. In terms of tissue distribution, ubiquitously expressed with highest expression in fetal tissues and adult brain, cerebellum and cerebellar vermis.

It is found in the mitochondrion matrix. The protein resides in the mitochondrion inner membrane. In terms of biological role, substrate recognition and binding subunit of the essential mitochondrial processing protease (MPP), which cleaves the mitochondrial sequence off newly imported precursors proteins. The sequence is that of Mitochondrial-processing peptidase subunit alpha (PMPCA) from Homo sapiens (Human).